The chain runs to 332 residues: HTH-type transcriptional regulator RegA (332 aa).

One can recognise an HTH lacI-type domain in the interval 1-57 (MATSIKDVAREAGVSIATVSRVLNDIDVVNEDTKKKVLDAIKELGYRPNIVARSLKT). The H-T-H motif DNA-binding region spans 5 to 24 (IKDVAREAGVSIATVSRVLN).

Functionally, involved in the regulation of amylase production. The chain is HTH-type transcriptional regulator RegA (regA) from Clostridium saccharobutylicum.